Reading from the N-terminus, the 275-residue chain is NLFSVIVSLIFLYIINKTLTLYLVCTLPILIIVILPIGNIMKRVSSKSQEATAKLSSYYSNRLSTIKLIKTLSTYNIEKIKNYTLLKNIFDIELHKIKVLSFFEPIMNLILFINIFGILFLGYYLMENNMMKSGDMFAYVLYLFQIINPIVSITSYWTEVQRAIGSSDRILKINKEPEEVLTIKTTYNNFVQKMEINDLNFTKDNKQIINSISLDLHKGYIYNIIGESGCGKSTLLNILAGLNTEYTGNIYLDKLDKSQFSKYEWRNLFSYITQD.

The 162-residue stretch at 1–162 folds into the ABC transmembrane type-1 domain; that stretch reads NLFSVIVSLI…ITSYWTEVQR (162 aa). The next 3 membrane-spanning stretches (helical) occupy residues 21 to 41, 106 to 126, and 137 to 157; these read LYLVCTLPILIIVILPIGNIM, IMNLILFINIFGILFLGYYLM, and FAYVLYLFQIINPIVSITSYW.

It is found in the cell membrane. This is an uncharacterized protein from Staphylococcus epidermidis.